Consider the following 221-residue polypeptide: Germin-like protein 8-2 (221 aa).

The N-terminal stretch at methionine 1 to alanine 24 is a signal peptide. Cysteines 34 and 49 form a disulfide. Residues asparagine 54 and asparagine 79 are each glycosylated (N-linked (GlcNAc...) asparagine). Residues alanine 64–aspartate 215 form the Cupin type-1 domain. Residues histidine 112, histidine 114, glutamate 119, and histidine 160 each coordinate Mn(2+).

It belongs to the germin family. As to quaternary structure, oligomer (believed to be a pentamer but probably hexamer).

The protein resides in the secreted. Its subcellular location is the extracellular space. It is found in the apoplast. Plays a role in broad-spectrum disease resistance. Probably has no oxalate oxidase activity even if the active site is conserved. This is Germin-like protein 8-2 (GER3) from Oryza sativa subsp. japonica (Rice).